The sequence spans 223 residues: Translation initiation factor 6 (223 aa).

The protein belongs to the eIF-6 family.

Binds to the 50S ribosomal subunit and prevents its association with the 30S ribosomal subunit to form the 70S initiation complex. The polypeptide is Translation initiation factor 6 (Saccharolobus islandicus (strain Y.N.15.51 / Yellowstone #2) (Sulfolobus islandicus)).